The chain runs to 461 residues: Cysteine--tRNA ligase (461 aa).

Position 29 (cysteine 29) interacts with Zn(2+). The short motif at methionine 31 to histidine 41 is the 'HIGH' region element. Zn(2+)-binding residues include cysteine 210, histidine 235, and glutamate 239. A 'KMSKS' region motif is present at residues lysine 267–serine 271. ATP is bound at residue lysine 270.

This sequence belongs to the class-I aminoacyl-tRNA synthetase family. As to quaternary structure, monomer. Zn(2+) is required as a cofactor.

The protein resides in the cytoplasm. The enzyme catalyses tRNA(Cys) + L-cysteine + ATP = L-cysteinyl-tRNA(Cys) + AMP + diphosphate. This Azotobacter vinelandii (strain DJ / ATCC BAA-1303) protein is Cysteine--tRNA ligase.